Consider the following 284-residue polypeptide: 3-methyl-2-oxobutanoate hydroxymethyltransferase (284 aa).

Mg(2+)-binding residues include Asp52 and Asp91. 3-methyl-2-oxobutanoate contacts are provided by residues 52–53, Asp91, and Lys121; that span reads DS. Glu123 serves as a coordination point for Mg(2+). Residue Glu191 is the Proton acceptor of the active site.

It belongs to the PanB family. Homodecamer; pentamer of dimers. The cofactor is Mg(2+).

The protein resides in the cytoplasm. It carries out the reaction 3-methyl-2-oxobutanoate + (6R)-5,10-methylene-5,6,7,8-tetrahydrofolate + H2O = 2-dehydropantoate + (6S)-5,6,7,8-tetrahydrofolate. Its pathway is cofactor biosynthesis; (R)-pantothenate biosynthesis; (R)-pantoate from 3-methyl-2-oxobutanoate: step 1/2. Catalyzes the reversible reaction in which hydroxymethyl group from 5,10-methylenetetrahydrofolate is transferred onto alpha-ketoisovalerate to form ketopantoate. In Deinococcus radiodurans (strain ATCC 13939 / DSM 20539 / JCM 16871 / CCUG 27074 / LMG 4051 / NBRC 15346 / NCIMB 9279 / VKM B-1422 / R1), this protein is 3-methyl-2-oxobutanoate hydroxymethyltransferase.